The following is a 421-amino-acid chain: 5-hydroxytryptamine receptor 2 (421 aa).

Residues 1–21 (MLCGRLRHTMNSTTCFFSHRT) lie on the Extracellular side of the membrane. N-linked (GlcNAc...) asparagine glycosylation is present at asparagine 11. A helical membrane pass occupies residues 22–42 (VLIGIVGSLIIAVSVVGNVLV). Residues 43-59 (CLAIFTEPILSHSKSKF) are Cytoplasmic-facing. The chain crosses the membrane as a helical span at residues 60–79 (FIVSLAVADLLLALLVMTFA). Residues 80 to 95 (LVNSLYGYWLFGETFC) lie on the Extracellular side of the membrane. Cysteine 95 and cysteine 210 are disulfide-bonded. A helical transmembrane segment spans residues 96 to 118 (FIWMSADVMCETASIFSICVISY). Over 119 to 138 (NRLKQVQKPLQYEEFMTTTR) the chain is Cytoplasmic. Residues 139-160 (ALLIIASLWICSFVVSFVPFFL) form a helical membrane-spanning segment. Topologically, residues 161 to 213 (EWHELSMEEIKTIFKDLISDKVKTSDAHTFSFALEQTLGDNRTSNPKPECLFD) are extracellular. A helical membrane pass occupies residues 214 to 234 (VHFIYSVIYSLFCFYIPCTLM). Over 235 to 274 (LRNYLRLFLIAKKHHVRIKNLHRLHRNQGTQGSKAARTLT) the chain is Cytoplasmic. The chain crosses the membrane as a helical span at residues 275 to 295 (IITGTFLACWLPFFIINPIEA). Residues 296–304 (VDEHLIPLE) lie on the Extracellular side of the membrane. The helical transmembrane segment at 305–325 (CFMVTIWLGYFNSCVNPIIYG) threads the bilayer. The Cytoplasmic portion of the chain corresponds to 326-421 (TSNSKFRAAF…MLSESDTVFS (96 aa)).

It belongs to the G-protein coupled receptor 1 family. As to expression, central nervous system.

Its subcellular location is the cell membrane. In terms of biological role, this is one of the several different receptors for 5-hydroxytryptamine (serotonin). 5-HT plays important roles in various behavioral and physiological processes in aplysia. These include feeding, locomotion, circadian rhythm, learning and memory, synaptic plasticity, and synaptic growth. This receptor is mediated by G proteins that stimulate phospholipase C. This Aplysia californica (California sea hare) protein is 5-hydroxytryptamine receptor 2 (5HTB2).